A 78-amino-acid polypeptide reads, in one-letter code: Acyl carrier protein (78 aa).

The Carrier domain maps to 2–77 (QNIEKKIKKI…SIFDIIKKYV (76 aa)). Ser37 is subject to O-(pantetheine 4'-phosphoryl)serine.

This sequence belongs to the acyl carrier protein (ACP) family. In terms of processing, 4'-phosphopantetheine is transferred from CoA to a specific serine of apo-ACP by AcpS. This modification is essential for activity because fatty acids are bound in thioester linkage to the sulfhydryl of the prosthetic group.

It is found in the cytoplasm. Its pathway is lipid metabolism; fatty acid biosynthesis. Functionally, carrier of the growing fatty acid chain in fatty acid biosynthesis. This chain is Acyl carrier protein, found in Buchnera aphidicola subsp. Baizongia pistaciae (strain Bp).